Here is an 872-residue protein sequence, read N- to C-terminus: MKQLSSAQVRQMWLDFWATKGHSVEPSVSLVPVNDPTLLWINSGVATLKKYFDGTIIPENPRITNAQKAIRTNDIENVGKTARHHTMFEMLGNFSIGDYFRDEAITWAYELLTSPEWFDFPAEKLYMTYYPDDKDSYNRWIEVGVDPSHLIPIEDNFWEIGAGPSGPDTEIFFDRGEAFDPENIGLRLLAEDIENDRYIEIWNIVLSQFNADPAVPRSEYKELPHKNIDTGAGLERLVAVIQGAKTNFETDLFMPIIREVEKLSGKVYDQDGDNMSFKVIADHIRSLSFAIGDGALPGNEGRGYVLRRLLRRASMHGQKLGINEPFLYKLVPTVGKIMESYYPEVLEKRDFIEKIVKSEEESFARTLHSGQHFAQGIVADLKEKGQSVIAGSDVFKLYDTYGFPVELTEEIAEEAGMTVDREGFEAAMKEQQERARASAVKGGSMGMQNETLQNITVESVFNYNASQLSSKLVAIVADNAEVGAVSEGTASLIFAETSFYAEMGGQVADYGQILDESGKVVATVTNVQKAPNGQALHTVEVLAPLALNQEYTLAIDSNRRHRVMKNHTATHLLHAALHNILGNHATQAGSLNEVEFLRFDFTHFQAVTAEELRAIEQQVNEKIWEALEVKTVETDIDTAKEMGAMALFGEKYGKEVRVVTIGDYSIELCGGTHVDNTSEIGLFKIVKEEGIGSGTRRILAVTGKEAFEAYREQEDALKAIAATLKAPQVKEVPHKVEGLQEQLRQLQKENAELKEKAAAAAAGDIFKDVKEVNGHRYIASQVSVSDAGALRTFADNWKQKDYSDLLVLVAAIGDKVNVLVASKTKDLHAGNLVKELAPIIDGRGGGKPDMAMAGGSNQPKIQELLDAVAGKL.

Positions 567, 571, 669, and 673 each coordinate Zn(2+).

This sequence belongs to the class-II aminoacyl-tRNA synthetase family. Requires Zn(2+) as cofactor.

It localises to the cytoplasm. It catalyses the reaction tRNA(Ala) + L-alanine + ATP = L-alanyl-tRNA(Ala) + AMP + diphosphate. In terms of biological role, catalyzes the attachment of alanine to tRNA(Ala) in a two-step reaction: alanine is first activated by ATP to form Ala-AMP and then transferred to the acceptor end of tRNA(Ala). Also edits incorrectly charged Ser-tRNA(Ala) and Gly-tRNA(Ala) via its editing domain. The protein is Alanine--tRNA ligase of Streptococcus pneumoniae serotype 4 (strain ATCC BAA-334 / TIGR4).